A 220-amino-acid chain; its full sequence is MKKEKAVVVFSGGQDSTTCLFWAIEQFAEVEAVTFNYNQRHKLEIDCAVEIAKELGIKHTVLDMSLLNQLAPNALTRTDMEITHEEGELPSTFVDGRNLLFLSFAAVLAKQVGARHIVTGVCETDFSGYPDCRDVFVKSLNVTLNLSMDYPFVIHTPLMWIDKAETWKLSDELGAFEFVREKTLTCYNGIIGDGCGECPACQLRKAGLDTYLQEREGASN.

ATP is bound at residue 10–20 (FSGGQDSTTCL). Residues Cys-186, Cys-195, Cys-198, and Cys-201 each coordinate Zn(2+).

Belongs to the QueC family. Homodimer. It depends on Zn(2+) as a cofactor.

It carries out the reaction 7-carboxy-7-deazaguanine + NH4(+) + ATP = 7-cyano-7-deazaguanine + ADP + phosphate + H2O + H(+). The protein operates within purine metabolism; 7-cyano-7-deazaguanine biosynthesis. Its function is as follows. Catalyzes the ATP-dependent conversion of 7-carboxy-7-deazaguanine (CDG) to 7-cyano-7-deazaguanine (preQ(0)). This is 7-cyano-7-deazaguanine synthase from Bacillus anthracis (strain A0248).